A 350-amino-acid polypeptide reads, in one-letter code: Methylthioribose-1-phosphate isomerase (350 aa).

Aspartate 241 (proton donor) is an active-site residue.

It belongs to the eIF-2B alpha/beta/delta subunits family. MtnA subfamily.

It localises to the cytoplasm. Its subcellular location is the nucleus. The enzyme catalyses 5-(methylsulfanyl)-alpha-D-ribose 1-phosphate = 5-(methylsulfanyl)-D-ribulose 1-phosphate. The protein operates within amino-acid biosynthesis; L-methionine biosynthesis via salvage pathway; L-methionine from S-methyl-5-thio-alpha-D-ribose 1-phosphate: step 1/6. In terms of biological role, catalyzes the interconversion of methylthioribose-1-phosphate (MTR-1-P) into methylthioribulose-1-phosphate (MTRu-1-P). In Nematostella vectensis (Starlet sea anemone), this protein is Methylthioribose-1-phosphate isomerase.